We begin with the raw amino-acid sequence, 277 residues long: Caspase-6 (277 aa).

The propeptide occupies 1-5 (MTETD). Residues 25–27 (KRR) are tri-arginine exosite. At Ser-62 the chain carries Phosphoserine. His-104 is a catalytic residue. A 130's region region spans residues 108–125 (NHIYAYDAKIEIQTLTGL). Residue Cys-146 is part of the active site. A propeptide spanning residues 163-176 (HQTDKLDDNVTQVD) is cleaved from the precursor. A Phosphoserine modification is found at Ser-240. 2 S-palmitoyl cysteine lipidation sites follow: Cys-247 and Cys-260.

It belongs to the peptidase C14A family. As to quaternary structure, heterotetramer that consists of two anti-parallel arranged heterodimers, each one formed by a 18 kDa (p18) and a 11 kDa (p11) subunits. Interacts with BIRC6/bruce. Interacts with RIPK3. In terms of assembly, heterotetramer that consists of two anti-parallel arranged heterodimers, each one formed by a 18 kDa (Caspase-6 subunit p18) and a 11 kDa (Caspase-6 subunit p11) subunit. Post-translationally, phosphorylated by NUAK1; phosphorylation inhibits self-activation. Phosphorylation at Ser-240 by AMP-activated protein kinase (PRKAA1 or PRKAA2) inhibits autocleavage, preventing caspase activation, thereby preventing hepatocyte apoptosis. Palmitoylation by ZDHHC17 blocks dimerization and subsequent activation, leading to inhibit the cysteine protease activity. In terms of processing, can be cleaved and activated by different caspases, depending on the context. Cleaved and activated by caspase-8 (CASP8) and subsequently by caspase-3 (CASP3). Can also undergo autoactivation by mediating autocleavage at Asp-162 and Asp-176, while it is not able to cleave its N-terminal disordered prodomain. Cleaved and activated by CASP1, possibly in the context of inflammation.

It localises to the cytoplasm. It is found in the nucleus. The enzyme catalyses Strict requirement for Asp at position P1 and has a preferred cleavage sequence of Val-Glu-His-Asp-|-.. During activation, the N-terminal disordered prodomain is removed by cleavage. Concomitantly, double cleavage gives rise to a large 18-kDa and a small 11-kDa subunit. The two large and two small subunits then assemble to form the active CASP6 complex. Can be cleaved and activated by different caspases, depending on the context. Cleaved and activated by caspase-8 (CASP8) and subsequently by caspase-3 (CASP3). Can also undergo autoactivation by mediating autocleavage at Asp-162 and Asp-176, while it is not able to cleave its N-terminal disordered prodomain. Intramolecular cleavage at Asp-176 is a prerequisite for CASP6 self-activation. Cleaved and activated by CASP1 in neurons, possibly in the context of inflammation. Phosphorylation at Ser-240 inhibits autocleavage, preventing caspase activation. In terms of biological role, cysteine protease that plays essential roles in programmed cell death, axonal degeneration, development and innate immunity. Acts as a non-canonical executioner caspase during apoptosis: localizes in the nucleus and cleaves the nuclear structural protein NUMA1 and lamin A/LMNA thereby inducing nuclear shrinkage and fragmentation. Lamin-A/LMNA cleavage is required for chromatin condensation and nuclear disassembly during apoptotic execution. Acts as a regulator of liver damage by promoting hepatocyte apoptosis: in absence of phosphorylation by AMP-activated protein kinase (AMPK), catalyzes cleavage of BID, leading to cytochrome c release, thereby participating in nonalcoholic steatohepatitis. Cleaves PARK7/DJ-1 in cells undergoing apoptosis. Involved in intrinsic apoptosis by mediating cleavage of RIPK1. Furthermore, cleaves many transcription factors such as NF-kappa-B and cAMP response element-binding protein/CREBBP. Cleaves phospholipid scramblase proteins XKR4 and XKR9. In addition to apoptosis, involved in different forms of programmed cell death. Plays an essential role in defense against viruses by acting as a central mediator of the ZBP1-mediated pyroptosis, apoptosis, and necroptosis (PANoptosis), independently of its cysteine protease activity. PANoptosis is a unique inflammatory programmed cell death, which provides a molecular scaffold that allows the interactions and activation of machinery required for inflammasome/pyroptosis, apoptosis and necroptosis. Mechanistically, interacts with RIPK3 and enhances the interaction between RIPK3 and ZBP1, leading to ZBP1-mediated inflammasome activation and cell death. Plays an essential role in axon degeneration during axon pruning which is the remodeling of axons during neurogenesis but not apoptosis. Regulates B-cell programs both during early development and after antigen stimulation. This chain is Caspase-6, found in Rattus norvegicus (Rat).